A 425-amino-acid polypeptide reads, in one-letter code: Enolase (425 aa).

Glutamine 163 serves as a coordination point for (2R)-2-phosphoglycerate. Glutamate 205 serves as the catalytic Proton donor. Mg(2+)-binding residues include aspartate 242, glutamate 285, and aspartate 312. The (2R)-2-phosphoglycerate site is built by lysine 337, arginine 366, serine 367, and lysine 388. The Proton acceptor role is filled by lysine 337.

It belongs to the enolase family. The cofactor is Mg(2+).

It is found in the cytoplasm. It localises to the secreted. The protein localises to the cell surface. The catalysed reaction is (2R)-2-phosphoglycerate = phosphoenolpyruvate + H2O. It participates in carbohydrate degradation; glycolysis; pyruvate from D-glyceraldehyde 3-phosphate: step 4/5. Its function is as follows. Catalyzes the reversible conversion of 2-phosphoglycerate (2-PG) into phosphoenolpyruvate (PEP). It is essential for the degradation of carbohydrates via glycolysis. This chain is Enolase, found in Acidiphilium cryptum (strain JF-5).